The sequence spans 440 residues: tRNA(Ile)-lysidine synthase (440 aa).

An ATP-binding site is contributed by 13-18; sequence SGGADS.

Belongs to the tRNA(Ile)-lysidine synthase family.

It is found in the cytoplasm. It catalyses the reaction cytidine(34) in tRNA(Ile2) + L-lysine + ATP = lysidine(34) in tRNA(Ile2) + AMP + diphosphate + H(+). Ligates lysine onto the cytidine present at position 34 of the AUA codon-specific tRNA(Ile) that contains the anticodon CAU, in an ATP-dependent manner. Cytidine is converted to lysidine, thus changing the amino acid specificity of the tRNA from methionine to isoleucine. The polypeptide is tRNA(Ile)-lysidine synthase (Solibacter usitatus (strain Ellin6076)).